The following is a 376-amino-acid chain: Anhydro-N-acetylmuramic acid kinase (376 aa).

16 to 23 (GTSMDGVD) is a binding site for ATP.

This sequence belongs to the anhydro-N-acetylmuramic acid kinase family.

The enzyme catalyses 1,6-anhydro-N-acetyl-beta-muramate + ATP + H2O = N-acetyl-D-muramate 6-phosphate + ADP + H(+). It functions in the pathway amino-sugar metabolism; 1,6-anhydro-N-acetylmuramate degradation. Its pathway is cell wall biogenesis; peptidoglycan recycling. In terms of biological role, catalyzes the specific phosphorylation of 1,6-anhydro-N-acetylmuramic acid (anhMurNAc) with the simultaneous cleavage of the 1,6-anhydro ring, generating MurNAc-6-P. Is required for the utilization of anhMurNAc either imported from the medium or derived from its own cell wall murein, and thus plays a role in cell wall recycling. In Paraburkholderia xenovorans (strain LB400), this protein is Anhydro-N-acetylmuramic acid kinase.